The sequence spans 165 residues: Phosphopantetheine adenylyltransferase (165 aa).

Substrate is bound at residue serine 11. ATP-binding positions include 11 to 12 (SF) and histidine 19. The substrate site is built by lysine 43, threonine 76, and arginine 90. Residues 91 to 93 (GIR), glutamate 101, and 126 to 132 (FSFISSS) contribute to the ATP site.

Belongs to the bacterial CoaD family. Homohexamer. Mg(2+) is required as a cofactor.

It is found in the cytoplasm. It carries out the reaction (R)-4'-phosphopantetheine + ATP + H(+) = 3'-dephospho-CoA + diphosphate. The protein operates within cofactor biosynthesis; coenzyme A biosynthesis; CoA from (R)-pantothenate: step 4/5. In terms of biological role, reversibly transfers an adenylyl group from ATP to 4'-phosphopantetheine, yielding dephospho-CoA (dPCoA) and pyrophosphate. The sequence is that of Phosphopantetheine adenylyltransferase from Latilactobacillus sakei subsp. sakei (strain 23K) (Lactobacillus sakei subsp. sakei).